We begin with the raw amino-acid sequence, 299 residues long: Hydrogenase maturation factor HypB (299 aa).

Ni(2+)-binding residues include Cys2, Cys5, and Cys7. Residues 18 to 57 form a disordered region; that stretch reads EVGDDGHGHHHHDGHHDHDHDHDHHRGDHEHDDHHHAEDG. Residues 31 to 57 show a composition bias toward basic and acidic residues; it reads GHHDHDHDHDHHRGDHEHDDHHHAEDG. Residues 107-268 are G-domain; it reads ALNFVSSPGS…LRVNPRLQTL (162 aa). Positions 167, 168, and 199 each coordinate Ni(2+). Zn(2+)-binding residues include Cys167, His168, and Cys199.

This sequence belongs to the SIMIBI class G3E GTPase family. HypB/HupM subfamily.

Involved in the maturation of [NiFe] hydrogenases. Required for nickel insertion into the metal center of the hydrogenase. Exhibits a low intrinsic GTPase activity, which is essential for nickel insertion. Is able to bind 4 nickel ions per subunit. Can also bind zinc. This Rhizobium leguminosarum bv. viciae protein is Hydrogenase maturation factor HypB.